A 591-amino-acid chain; its full sequence is DDB1- and CUL4-associated factor 8 (591 aa).

Basic and acidic residues predominate over residues 1-14 (MSSKRPSTDGRRDL). Residues 1 to 140 (MSSKRPSTDG…EDWVSSETTA (140 aa)) form a disordered region. Phosphoserine occurs at positions 21 and 22. A Nuclear export signal motif is present at residues 39 to 50 (IEVEASDLSLSL). 2 stretches are compositionally biased toward basic and acidic residues: residues 65–99 (RGTD…HGHS) and 118–131 (SRDQ…RALE). Phosphoserine is present on residues S99, S123, and S124. WD repeat units lie at residues 185 to 224 (GHTG…PVLD), 228 to 269 (GHKS…CCKN), 275 to 315 (QHKG…PASK), 323 to 363 (EKKV…ENEN), 379 to 418 (ESKA…GAQY), 426 to 466 (RNNA…IIQF), and 470 to 509 (DKGG…STEL). R198 carries the omega-N-methylarginine; by PRMT1 modification. The segment at 552-591 (HRRWREPGVGATDADSDESPSSSDTSDEEEGPDRVQCMPS) is disordered.

The protein belongs to the WD repeat DCAF8 family. Interacts with DDB1, CUL4A and CUL4B. Interacts with KPNA1, KPNB1 and XPO1.

The protein localises to the nucleus. It is found in the cytoplasm. The protein operates within protein modification; protein ubiquitination. May function as a substrate receptor for CUL4-DDB1 E3 ubiquitin-protein ligase complex. The sequence is that of DDB1- and CUL4-associated factor 8 (Dcaf8) from Rattus norvegicus (Rat).